Consider the following 258-residue polypeptide: Transcription factor ORG3 (258 aa).

One can recognise a bHLH domain in the interval 76-128 (VKKLNHNASERDRRRKINSLFSSLRSCLPASGQSKKLSIPATVSRSLKYIPEL).

In terms of assembly, homodimer. Expressed in vascular tissues. Detected in roots.

It localises to the nucleus. The sequence is that of Transcription factor ORG3 (ORG3) from Arabidopsis thaliana (Mouse-ear cress).